The following is a 192-amino-acid chain: Ribose 1,5-bisphosphate phosphokinase PhnN (192 aa).

Belongs to the ribose 1,5-bisphosphokinase family.

It carries out the reaction alpha-D-ribose 1,5-bisphosphate + ATP = 5-phospho-alpha-D-ribose 1-diphosphate + ADP. It participates in metabolic intermediate biosynthesis; 5-phospho-alpha-D-ribose 1-diphosphate biosynthesis; 5-phospho-alpha-D-ribose 1-diphosphate from D-ribose 5-phosphate (route II): step 3/3. Its function is as follows. Catalyzes the phosphorylation of ribose 1,5-bisphosphate to 5-phospho-D-ribosyl alpha-1-diphosphate (PRPP). The protein is Ribose 1,5-bisphosphate phosphokinase PhnN of Achromobacter xylosoxidans (strain A8).